Reading from the N-terminus, the 354-residue chain is UDP-N-acetylglucosamine--N-acetylmuramyl-(pentapeptide) pyrophosphoryl-undecaprenol N-acetylglucosamine transferase (354 aa).

UDP-N-acetyl-alpha-D-glucosamine contacts are provided by residues Thr15 to Gly17, Asn127, Arg163, Ser191, Ile244, Ala263 to Glu268, and Gln288.

It belongs to the glycosyltransferase 28 family. MurG subfamily.

The protein localises to the cell inner membrane. The enzyme catalyses di-trans,octa-cis-undecaprenyl diphospho-N-acetyl-alpha-D-muramoyl-L-alanyl-D-glutamyl-meso-2,6-diaminopimeloyl-D-alanyl-D-alanine + UDP-N-acetyl-alpha-D-glucosamine = di-trans,octa-cis-undecaprenyl diphospho-[N-acetyl-alpha-D-glucosaminyl-(1-&gt;4)]-N-acetyl-alpha-D-muramoyl-L-alanyl-D-glutamyl-meso-2,6-diaminopimeloyl-D-alanyl-D-alanine + UDP + H(+). It functions in the pathway cell wall biogenesis; peptidoglycan biosynthesis. In terms of biological role, cell wall formation. Catalyzes the transfer of a GlcNAc subunit on undecaprenyl-pyrophosphoryl-MurNAc-pentapeptide (lipid intermediate I) to form undecaprenyl-pyrophosphoryl-MurNAc-(pentapeptide)GlcNAc (lipid intermediate II). The protein is UDP-N-acetylglucosamine--N-acetylmuramyl-(pentapeptide) pyrophosphoryl-undecaprenol N-acetylglucosamine transferase of Aliivibrio salmonicida (strain LFI1238) (Vibrio salmonicida (strain LFI1238)).